The chain runs to 1868 residues: Inactive histone-lysine N-methyltransferase 2E (1868 aa).

Residues 63–66 (DHNY) carry the HCFC1-binding motif (HBM) motif. The PHD-type zinc finger occupies 118–166 (VTRCICGFTHDDGYMICCDKCSVWQHIDCMGIDRQHIPDTYLCERCQPR). Zn(2+)-binding residues include Cys-121, Cys-123, Cys-135, Cys-138, His-143, Cys-146, Cys-160, and Cys-163. 3 disordered regions span residues 178–197 (RRKRENMSDGDTSATESGDE), 217–268 (ASRV…SSDS), and 308–329 (GSGNDSKDMNKSELSTNNSLFR). Residues 330 to 447 (PPVESHIQKN…KGTEITIAFD (118 aa)) form the SET domain. O-linked (GlcNAc) serine glycosylation occurs at Ser-435. Thr-440 is a glycosylation site (O-linked (GlcNAc) threonine). The tract at residues 472–504 (KRSSESTENINSGYETRRKKGKKEKDTSKEKDI) is disordered. Over residues 494–504 (KEKDTSKEKDI) the composition is skewed to basic and acidic residues. The stretch at 559–613 (VEMESEEQIAERKRKMTREERKMEAILQAFARLEKREKRREQALERISTAKTEVK) forms a coiled coil. Residues 646-670 (NRTKQRKSFSRSRTHIGQQRRRHRT) show a composition bias toward basic residues. The interval 646 to 682 (NRTKQRKSFSRSRTHIGQQRRRHRTVSMCSDIPPSSP) is disordered. Ser-837 and Ser-845 each carry phosphoserine. Positions 884–908 (YSESSTPTPSPYATPTHTDITPTDP) are enriched in low complexity. Disordered stretches follow at residues 884–924 (YSES…ETYR) and 1038–1068 (SMETPAHDRTEPSNQLDSTHSGRGTMYSSWV). Residues 1049 to 1068 (PSNQLDSTHSGRGTMYSSWV) are compositionally biased toward polar residues. Phosphoserine is present on Ser-1070. 4 disordered regions span residues 1165 to 1222 (KRQR…PPPA), 1236 to 1315 (SSEE…SNHI), 1334 to 1565 (PDAE…QNQQ), and 1585 to 1842 (VFTS…QASP). The segment covering 1184–1197 (SVSPHPSGSLSSSG) has biased composition (low complexity). Polar residues predominate over residues 1203 to 1213 (SSENGEQAENQ). The residue at position 1282 (Ser-1282) is a Phosphoserine. Residues 1282–1291 (SDHRKDKDSG) show a composition bias toward basic and acidic residues. 2 stretches are compositionally biased toward low complexity: residues 1294–1312 (SPCVSCSPSHVQSPPSSHS) and 1348–1363 (PSPDTSQSPSKTSKPG). Residue Ser-1364 is modified to Phosphoserine. Polar residues-rich tracts occupy residues 1389–1421 (ATVSEADNSVHQNPEPQHRQLSSNTPALSQNHA), 1451–1463 (HTENPPKSSTPHT), and 1488–1498 (SQSPQVGTPQR). A compositionally biased stretch (low complexity) spans 1506-1518 (AAAQNLQANPQQA). A compositionally biased stretch (polar residues) spans 1519-1547 (TSGALFTQTPSGQSSATYSQFNQQSLNST). The segment covering 1548–1558 (APPPPPPPPPS) has biased composition (pro residues). Polar residues predominate over residues 1585–1603 (VFTSGPNQALPGSTSQQSV). Positions 1631–1642 (VPPPPPPPPAPG) are enriched in pro residues. Residues 1647–1656 (QQPSSHQQHS) show a composition bias toward polar residues. The segment covering 1682–1692 (LPPPPPPPGPA) has biased composition (pro residues). The span at 1706-1716 (QSLQAQHQHVV) shows a compositional bias: polar residues. Over residues 1719-1732 (APPPPPPPPPPPPA) the composition is skewed to pro residues. A compositionally biased stretch (polar residues) spans 1806 to 1816 (QGPNSIPTPTA).

This sequence belongs to the class V-like SAM-binding methyltransferase superfamily. Histone-lysine methyltransferase family. TRX/MLL subfamily. As to quaternary structure, component of a complex composed of KMT2E, OGT and USP7; the complex stabilizes KMT2E, preventing KMT2E ubiquitination and proteasomal-mediated degradation. Interacts (via N-terminus) with OGT (via TRP repeats). Interacts with deubiquitinating enzyme USP7 (via MATH domain). Interacts (via HBM motif) with HCFC1 (via Kelch domain). Interacts with E2F1; the interaction is probably indirect and is mediated via HCFC1. Post-translationally, ubiquitinated. Deubiquitinated by USP7. O-glycosylated at Ser-435 and Thr-440 in the SET domain by OGT which probably prevents KMT2E proteasomal-mediated degradation.

The protein localises to the chromosome. The protein resides in the cytoplasm. It localises to the cytoskeleton. It is found in the microtubule organizing center. Its subcellular location is the centrosome. The protein localises to the nucleus speckle. In terms of biological role, associates with chromatin regions downstream of transcriptional start sites of active genes and thus regulates gene transcription. Chromatin interaction is mediated via the binding to tri-methylated histone H3 at 'Lys-4' (H3K4me3). Key regulator of hematopoiesis involved in terminal myeloid differentiation and in the regulation of hematopoietic stem cell (HSCs) self-renewal by a mechanism that involves DNA methylation. Also acts as an important cell cycle regulator, participating in cell cycle regulatory network machinery at multiple cell cycle stages including G1/S transition, S phase progression and mitotic entry. Recruited to E2F1 responsive promoters by HCFC1 where it stimulates tri-methylation of histone H3 at 'Lys-4' and transcriptional activation and thereby facilitates G1 to S phase transition. During myoblast differentiation, required to suppress inappropriate expression of S-phase-promoting genes and maintain expression of determination genes in quiescent cells. The polypeptide is Inactive histone-lysine N-methyltransferase 2E (Kmt2e) (Mus musculus (Mouse)).